The primary structure comprises 407 residues: Peptide chain release factor subunit 1 (407 aa).

The protein belongs to the eukaryotic release factor 1 family. In terms of assembly, heterodimer of two subunits, one of which binds GTP.

It is found in the cytoplasm. In terms of biological role, directs the termination of nascent peptide synthesis (translation) in response to the termination codons UAA, UAG and UGA. The chain is Peptide chain release factor subunit 1 (prf1) from Archaeoglobus fulgidus (strain ATCC 49558 / DSM 4304 / JCM 9628 / NBRC 100126 / VC-16).